Reading from the N-terminus, the 373-residue chain is UPF0725 protein At1g23950 (373 aa).

Position 2 is an N-acetylthreonine (T2).

It belongs to the UPF0725 (EMB2204) family.

The chain is UPF0725 protein At1g23950 from Arabidopsis thaliana (Mouse-ear cress).